A 401-amino-acid polypeptide reads, in one-letter code: Imidazolonepropionase (401 aa).

Fe(3+) contacts are provided by histidine 70 and histidine 72. The Zn(2+) site is built by histidine 70 and histidine 72. 4-imidazolone-5-propanoate is bound by residues arginine 79, tyrosine 142, and histidine 175. Tyrosine 142 is a binding site for N-formimidoyl-L-glutamate. Histidine 240 lines the Fe(3+) pocket. Histidine 240 provides a ligand contact to Zn(2+). Glutamine 243 is a 4-imidazolone-5-propanoate binding site. Aspartate 315 contributes to the Fe(3+) binding site. Aspartate 315 contributes to the Zn(2+) binding site. N-formimidoyl-L-glutamate-binding residues include asparagine 317 and glycine 319. Threonine 320 lines the 4-imidazolone-5-propanoate pocket.

It belongs to the metallo-dependent hydrolases superfamily. HutI family. Zn(2+) serves as cofactor. Fe(3+) is required as a cofactor.

The protein resides in the cytoplasm. It carries out the reaction 4-imidazolone-5-propanoate + H2O = N-formimidoyl-L-glutamate. Its pathway is amino-acid degradation; L-histidine degradation into L-glutamate; N-formimidoyl-L-glutamate from L-histidine: step 3/3. In terms of biological role, catalyzes the hydrolytic cleavage of the carbon-nitrogen bond in imidazolone-5-propanoate to yield N-formimidoyl-L-glutamate. It is the third step in the universal histidine degradation pathway. The chain is Imidazolonepropionase from Caulobacter sp. (strain K31).